The primary structure comprises 378 residues: Chaperone protein DnaJ (378 aa).

Residues aspartate 5–glycine 70 form the J domain. Residues glycine 133–serine 211 form a CR-type zinc finger. 8 residues coordinate Zn(2+): cysteine 146, cysteine 149, cysteine 163, cysteine 166, cysteine 185, cysteine 188, cysteine 199, and cysteine 202. 4 CXXCXGXG motif repeats span residues cysteine 146–glycine 153, cysteine 163–glycine 170, cysteine 185–glycine 192, and cysteine 199–glycine 206.

Belongs to the DnaJ family. Homodimer. Requires Zn(2+) as cofactor.

Its subcellular location is the cytoplasm. Its function is as follows. Participates actively in the response to hyperosmotic and heat shock by preventing the aggregation of stress-denatured proteins and by disaggregating proteins, also in an autonomous, DnaK-independent fashion. Unfolded proteins bind initially to DnaJ; upon interaction with the DnaJ-bound protein, DnaK hydrolyzes its bound ATP, resulting in the formation of a stable complex. GrpE releases ADP from DnaK; ATP binding to DnaK triggers the release of the substrate protein, thus completing the reaction cycle. Several rounds of ATP-dependent interactions between DnaJ, DnaK and GrpE are required for fully efficient folding. Also involved, together with DnaK and GrpE, in the DNA replication of plasmids through activation of initiation proteins. The chain is Chaperone protein DnaJ from Shewanella woodyi (strain ATCC 51908 / MS32).